An 871-amino-acid polypeptide reads, in one-letter code: Chaperone protein ClpB 1 (871 aa).

Residues 6–147 form the Clp R domain; that stretch reads PNQFTEKAWA…REAIQQIRGS (142 aa). 2 repeat regions span residues 9 to 73 and 84 to 147; these read FTEK…ISRQ and LGQS…IRGS. Positions 160–341 are NBD1; that stretch reads AALEKYGRDL…RRFQQVYVDQ (182 aa). An ATP-binding site is contributed by 207–214; that stretch reads GEPGVGKT. A linker region spans residues 342–550; the sequence is PSVEDTISIL…IAEIISKWTG (209 aa). Residues 392 to 526 adopt a coiled-coil conformation; it reads IDLVDEAAAK…AEAKLREIQV (135 aa). Residues 560-771 are NBD2; the sequence is EAQKLLHLEE…RVDEFIIFHS (212 aa). Position 610–617 (610–617) interacts with ATP; that stretch reads GPTGVGKT. The tract at residues 772–871 is C-terminal; the sequence is LRKDQLRQIV…FRRQVELATV (100 aa).

It belongs to the ClpA/ClpB family. In terms of assembly, homohexamer. The oligomerization is ATP-dependent.

Its subcellular location is the cytoplasm. Part of a stress-induced multi-chaperone system, it is involved in the recovery of the cell from heat-induced damage, in cooperation with DnaK, DnaJ and GrpE. Acts before DnaK, in the processing of protein aggregates. Protein binding stimulates the ATPase activity; ATP hydrolysis unfolds the denatured protein aggregates, which probably helps expose new hydrophobic binding sites on the surface of ClpB-bound aggregates, contributing to the solubilization and refolding of denatured protein aggregates by DnaK. This Thermosynechococcus vestitus (strain NIES-2133 / IAM M-273 / BP-1) protein is Chaperone protein ClpB 1 (clpB1).